The chain runs to 601 residues: Glutathione-regulated potassium-efflux system protein KefB (601 aa).

13 consecutive transmembrane segments (helical) span residues 4 to 24, 29 to 49, 55 to 75, 87 to 107, 111 to 131, 152 to 172, 177 to 197, 207 to 227, 230 to 250, 262 to 282, 284 to 304, 324 to 344, and 356 to 376; these read ADLL…VPLA, IGAV…GLGF, EILH…GLEL, IFGV…GLLM, FLWQ…TAMA, VLLF…LLAG, HFDW…LIGG, FIAA…LVLS, LFMD…GVLL, AIDP…GMSL, LGVL…LVVI, MQFA…FSTA, and ALLL…MKGI. The RCK N-terminal domain occupies 400–519; that stretch reads KPQVIVVGFG…AGVTQFSRET (120 aa).

This sequence belongs to the monovalent cation:proton antiporter 2 (CPA2) transporter (TC 2.A.37) family. KefB subfamily. As to quaternary structure, interacts with the regulatory subunit KefG.

It is found in the cell inner membrane. Pore-forming subunit of a potassium efflux system that confers protection against electrophiles. Catalyzes K(+)/H(+) antiport. In Salmonella paratyphi B (strain ATCC BAA-1250 / SPB7), this protein is Glutathione-regulated potassium-efflux system protein KefB.